The sequence spans 436 residues: Acetylcholine receptor non-alpha chain (436 aa).

At isoleucine 1–proline 195 the chain is on the extracellular side. An N-linked (GlcNAc...) asparagine glycan is attached at asparagine 62. Cysteine 89 and cysteine 103 are joined by a disulfide. N-linked (GlcNAc...) asparagine glycosylation is present at asparagine 140. Transmembrane regions (helical) follow at residues leucine 196–leucine 219, valine 227–lysine 245, and tyrosine 261–leucine 280. Residues asparagine 281 to arginine 404 are Cytoplasmic-facing. A helical transmembrane segment spans residues leucine 405 to phenylalanine 423.

Belongs to the ligand-gated ion channel (TC 1.A.9) family. Acetylcholine receptor (TC 1.A.9.1) subfamily.

The protein localises to the postsynaptic cell membrane. It localises to the cell membrane. Functionally, after binding acetylcholine, the AChR responds by an extensive change in conformation that affects all subunits and leads to opening of an ion-conducting channel across the plasma membrane. The sequence is that of Acetylcholine receptor non-alpha chain from Onchocerca volvulus.